The chain runs to 156 residues: 6,7-dimethyl-8-ribityllumazine synthase (156 aa).

5-amino-6-(D-ribitylamino)uracil is bound by residues phenylalanine 23, 57–59, and 81–83; these read AFE and AVI. 86 to 87 is a (2S)-2-hydroxy-3-oxobutyl phosphate binding site; sequence AT. Histidine 89 acts as the Proton donor in catalysis. Position 114 (phenylalanine 114) interacts with 5-amino-6-(D-ribitylamino)uracil. Arginine 128 serves as a coordination point for (2S)-2-hydroxy-3-oxobutyl phosphate.

The protein belongs to the DMRL synthase family.

It carries out the reaction (2S)-2-hydroxy-3-oxobutyl phosphate + 5-amino-6-(D-ribitylamino)uracil = 6,7-dimethyl-8-(1-D-ribityl)lumazine + phosphate + 2 H2O + H(+). It participates in cofactor biosynthesis; riboflavin biosynthesis; riboflavin from 2-hydroxy-3-oxobutyl phosphate and 5-amino-6-(D-ribitylamino)uracil: step 1/2. Its function is as follows. Catalyzes the formation of 6,7-dimethyl-8-ribityllumazine by condensation of 5-amino-6-(D-ribitylamino)uracil with 3,4-dihydroxy-2-butanone 4-phosphate. This is the penultimate step in the biosynthesis of riboflavin. The chain is 6,7-dimethyl-8-ribityllumazine synthase from Sulfurovum sp. (strain NBC37-1).